Reading from the N-terminus, the 62-residue chain is Large ribosomal subunit protein bL28 (62 aa).

The protein belongs to the bacterial ribosomal protein bL28 family.

This Onion yellows phytoplasma (strain OY-M) protein is Large ribosomal subunit protein bL28.